We begin with the raw amino-acid sequence, 73 residues long: Potassium channel toxin alpha-KTx 27.1 (73 aa).

Residues 1 to 23 form the signal peptide; that stretch reads MKFLFLTLFVCCFIAVLVIPSEA.

The protein belongs to the short scorpion toxin superfamily. Potassium channel inhibitor family. Alpha-KTx 27 subfamily. In terms of processing, contains 4 disulfide bonds. In terms of tissue distribution, expressed by the venom gland.

Its subcellular location is the secreted. The polypeptide is Potassium channel toxin alpha-KTx 27.1 (Buthus israelis (Israeli scorpion)).